The primary structure comprises 100 residues: Small ribosomal subunit protein bS6 (100 aa).

This sequence belongs to the bacterial ribosomal protein bS6 family.

Its function is as follows. Binds together with bS18 to 16S ribosomal RNA. This Tropheryma whipplei (strain TW08/27) (Whipple's bacillus) protein is Small ribosomal subunit protein bS6.